A 328-amino-acid chain; its full sequence is ATP-dependent 6-phosphofructokinase (328 aa).

ATP is bound at residue Gly11. Residue 21–25 coordinates ADP; it reads RAAVR. Residues 72 to 73 and 102 to 105 each bind ATP; these read RS and GNGT. Mg(2+) is bound at residue Asn103. A substrate-binding site is contributed by 126 to 128; sequence TID. The active-site Proton acceptor is Asp128. ADP is bound at residue Arg155. Residues Arg163 and 170 to 172 each bind substrate; that span reads MGR. Residues 186–188 and 214–216 contribute to the ADP site; these read GAE and KAS. Residues Glu223, Arg247, and 253 to 256 each bind substrate; that span reads HVQR.

Belongs to the phosphofructokinase type A (PFKA) family. ATP-dependent PFK group I subfamily. Prokaryotic clade 'B1' sub-subfamily. In terms of assembly, homotetramer. Requires Mg(2+) as cofactor.

It is found in the cytoplasm. The enzyme catalyses beta-D-fructose 6-phosphate + ATP = beta-D-fructose 1,6-bisphosphate + ADP + H(+). The protein operates within carbohydrate degradation; glycolysis; D-glyceraldehyde 3-phosphate and glycerone phosphate from D-glucose: step 3/4. Allosterically activated by ADP and other diphosphonucleosides, and allosterically inhibited by phosphoenolpyruvate. Functionally, catalyzes the phosphorylation of D-fructose 6-phosphate to fructose 1,6-bisphosphate by ATP, the first committing step of glycolysis. The polypeptide is ATP-dependent 6-phosphofructokinase (Cytophaga hutchinsonii (strain ATCC 33406 / DSM 1761 / CIP 103989 / NBRC 15051 / NCIMB 9469 / D465)).